The chain runs to 415 residues: Procollagen C-endopeptidase enhancer 2 (415 aa).

The first 23 residues, Met-1–Gln-23, serve as a signal peptide directing secretion. 7 disulfides stabilise this stretch: Cys-33-Cys-59, Cys-86-Cys-107, Cys-154-Cys-181, Cys-208-Cys-231, Cys-297-Cys-364, Cys-301-Cys-367, and Cys-312-Cys-415. CUB domains follow at residues Cys-33 to Ala-144 and Cys-154 to Arg-268. Positions Cys-297 to Cys-415 constitute an NTR domain. Asn-355 carries an N-linked (GlcNAc...) asparagine glycan.

As to quaternary structure, interacts with heparin with high affinity, and type I or II collagen. In terms of processing, O-glycosylated; contains sialic acid. Highly expressed in the heart, trabecular meshwork, pituitary gland, bladder, mammary gland, trachea and placenta and weakly expressed in the brain. Expressed in cartilage.

The protein localises to the secreted. Functionally, binds to the C-terminal propeptide of types I and II procollagens and may enhance the cleavage of that propeptide by BMP1. In Homo sapiens (Human), this protein is Procollagen C-endopeptidase enhancer 2 (PCOLCE2).